The primary structure comprises 454 residues: tRNA modification GTPase MnmE (454 aa).

Positions 23, 80, and 120 each coordinate (6S)-5-formyl-5,6,7,8-tetrahydrofolate. Residues 216–377 form the TrmE-type G domain; it reads GMKVVIAGRP…LRDHLKQSMG (162 aa). N226 is a binding site for K(+). GTP contacts are provided by residues 226 to 231, 245 to 251, 270 to 273, 335 to 338, and 358 to 360; these read NAGKSS, TDIAGTT, DTAG, NKAD, and SAR. Mg(2+) is bound at residue S230. The K(+) site is built by T245, I247, and T250. T251 lines the Mg(2+) pocket. Position 454 (K454) interacts with (6S)-5-formyl-5,6,7,8-tetrahydrofolate.

The protein belongs to the TRAFAC class TrmE-Era-EngA-EngB-Septin-like GTPase superfamily. TrmE GTPase family. As to quaternary structure, homodimer. Heterotetramer of two MnmE and two MnmG subunits. K(+) serves as cofactor.

The protein resides in the cytoplasm. Functionally, exhibits a very high intrinsic GTPase hydrolysis rate. Involved in the addition of a carboxymethylaminomethyl (cmnm) group at the wobble position (U34) of certain tRNAs, forming tRNA-cmnm(5)s(2)U34. This is tRNA modification GTPase MnmE from Yersinia pestis bv. Antiqua (strain Antiqua).